Here is a 1515-residue protein sequence, read N- to C-terminus: Glutamate synthase [NADPH] large chain (1515 aa).

A propeptide spanning residues 1–36 is cleaved from the precursor; sequence MTTELNQGEQFVADFRANAAALTTANAYNPEDEHDA. Cys-37 functions as the For GATase activity in the catalytic mechanism. The region spanning 37–432 is the Glutamine amidotransferase type-2 domain; sequence CGVGFIAAID…PGEMIAVDLQ (396 aa). Residues 916–937 are disordered; it reads AKSDSGEGGEDPARFRPDKNGD. Residues 926–936 show a composition bias toward basic and acidic residues; it reads DPARFRPDKNG. Residues 1085-1142 and 1086-1142 contribute to the FMN site; these read LSEV…IMVR and SEVH…IMVR. Residues Cys-1138, Cys-1144, and Cys-1149 each coordinate [3Fe-4S] cluster.

It belongs to the glutamate synthase family. Aggregate of 4 catalytic active heterodimers, consisting of a large and a small subunit. [3Fe-4S] cluster is required as a cofactor. Requires FAD as cofactor. FMN serves as cofactor.

It carries out the reaction 2 L-glutamate + NADP(+) = L-glutamine + 2-oxoglutarate + NADPH + H(+). It functions in the pathway amino-acid biosynthesis; L-glutamate biosynthesis via GLT pathway; L-glutamate from 2-oxoglutarate and L-glutamine (NADP(+) route): step 1/1. The protein operates within energy metabolism; nitrogen metabolism. This chain is Glutamate synthase [NADPH] large chain (gltB), found in Azospirillum brasilense.